A 381-amino-acid polypeptide reads, in one-letter code: Succinyl-diaminopimelate desuccinylase (381 aa).

Zn(2+) is bound at residue histidine 71. Aspartate 73 is a catalytic residue. Aspartate 104 is a binding site for Zn(2+). Residue glutamate 136 is the Proton acceptor of the active site. Residues glutamate 137, glutamate 166, and histidine 351 each coordinate Zn(2+).

The protein belongs to the peptidase M20A family. DapE subfamily. As to quaternary structure, homodimer. The cofactor is Zn(2+). It depends on Co(2+) as a cofactor.

It catalyses the reaction N-succinyl-(2S,6S)-2,6-diaminopimelate + H2O = (2S,6S)-2,6-diaminopimelate + succinate. Its pathway is amino-acid biosynthesis; L-lysine biosynthesis via DAP pathway; LL-2,6-diaminopimelate from (S)-tetrahydrodipicolinate (succinylase route): step 3/3. Catalyzes the hydrolysis of N-succinyl-L,L-diaminopimelic acid (SDAP), forming succinate and LL-2,6-diaminopimelate (DAP), an intermediate involved in the bacterial biosynthesis of lysine and meso-diaminopimelic acid, an essential component of bacterial cell walls. The protein is Succinyl-diaminopimelate desuccinylase of Ehrlichia chaffeensis (strain ATCC CRL-10679 / Arkansas).